The primary structure comprises 367 residues: Homoserine O-acetyltransferase (367 aa).

The 307-residue stretch at 44–350 (NAIMVTHAWT…AYGHDAFLLE (307 aa)) folds into the AB hydrolase-1 domain. Catalysis depends on serine 150, which acts as the Nucleophile. Arginine 217 lines the substrate pocket. Residues aspartate 311 and histidine 344 contribute to the active site. Substrate is bound at residue aspartate 345.

Belongs to the AB hydrolase superfamily. MetX family. As to quaternary structure, homodimer.

The protein resides in the cytoplasm. The enzyme catalyses L-homoserine + acetyl-CoA = O-acetyl-L-homoserine + CoA. The protein operates within amino-acid biosynthesis; L-methionine biosynthesis via de novo pathway; O-acetyl-L-homoserine from L-homoserine: step 1/1. Its function is as follows. Transfers an acetyl group from acetyl-CoA to L-homoserine, forming acetyl-L-homoserine. The sequence is that of Homoserine O-acetyltransferase from Geotalea daltonii (strain DSM 22248 / JCM 15807 / FRC-32) (Geobacter daltonii).